We begin with the raw amino-acid sequence, 250 residues long: DNA repair protein RecO (250 aa).

The protein belongs to the RecO family.

In terms of biological role, involved in DNA repair and RecF pathway recombination. The protein is DNA repair protein RecO of Lactobacillus helveticus (strain DPC 4571).